The primary structure comprises 303 residues: Cytosolic-abundant heat soluble protein 3 (303 aa).

The segment covering 1 to 19 has biased composition (low complexity); that stretch reads MSSRQNQQSSSQHSSSSQQ. Residues 1–67 form a disordered region; that stretch reads MSSRQNQQSS…PGSHSEVHEE (67 aa). A coiled-coil region spans residues 170–257; it reads ARQDEQDAGM…ESAKAQTNVN (88 aa). 2 CAHS motif regions span residues 184–202 and 221–239; these read YREE…LERQ and QERE…LELE. A compositionally biased stretch (polar residues) spans 270 to 280; it reads KGAIQTSADKS. The segment at 270 to 303 is disordered; it reads KGAIQTSADKSSTTKTGPTTVTQIKHTEQHTERR. Residues 282 to 291 show a composition bias toward low complexity; it reads TTKTGPTTVT. Over residues 294–303 the composition is skewed to basic and acidic residues; the sequence is KHTEQHTERR.

The protein belongs to the Cytosolic-abundant heat soluble protein (CAHS) family.

Its subcellular location is the cytoplasm. CAHS proteins are cytosolic heat soluble proteins that seem to contribute to the anhydrobiosis in tardigrades, but their specific mechanisms are yet to be identified. It is possible that protection during anhydrobiosis might occur via the stabilization of vitrifying small molecules such as sugars, but not via the direct glass transition of CAHS proteins themselves. This is Cytosolic-abundant heat soluble protein 3 from Ramazzottius varieornatus (Water bear).